Here is a 960-residue protein sequence, read N- to C-terminus: Dynamin-like GTPase OPA1, mitochondrial (960 aa).

A mitochondrion-targeting transit peptide spans 1–87 (MWRLRRAAVA…IKYGYQPRRN (87 aa)). Over 88 to 96 (FWPARLATR) the chain is Mitochondrial matrix. Residues 97 to 113 (LLKLRYLILGSAVGGGY) form a helical membrane-spanning segment. The Mitochondrial intermembrane segment spans residues 114–770 (TAKKTFDQWK…NAIENMVGPD (657 aa)). Positions 210 to 254 (SDKEKIDQLQEELLHTQLKYQRILERLEKENKELRKLVLQKDDKG) form a coiled coil. Lys228 bears the N6-acetyllysine mark. In terms of domain architecture, Dynamin-type G spans 285 to 561 (QDHLPRVVVV…FWKMVRESVE (277 aa)). The tract at residues 295–302 (GDQSAGKT) is G1 motif. Ser298, Gly300, Lys301, Thr302, Ser303, and Gly317 together coordinate GTP. Thr302 is a Mg(2+) binding site. The tract at residues 321-324 (MMTR) is G2 motif. Thr323 and Asp398 together coordinate Mg(2+). The tract at residues 398–401 (DLPG) is G3 motif. The G4 motif stretch occupies residues 467–470 (TKVD). Residues Lys468, Asp470, and Thr503 each contribute to the GTP site. The G5 motif stretch occupies residues 501–504 (VVTG). Stalk region stretches follow at residues 589 to 836 (DRNE…IKDT) and 874 to 928 (CNDV…IKLL). Residues 736–856 (SDKQQWDAAI…KTALNHCNLC (121 aa)) are paddle region. An intramembrane segment occupies 771-781 (WKKRWLYWKNR). The Mitochondrial intermembrane segment spans residues 782 to 960 (TQEQCVHNET…AFIEALHQEK (179 aa)). Residues Cys856 and Cys874 are joined by a disulfide bond. The stretch at 895–960 (RQQLTNTEVR…AFIEALHQEK (66 aa)) forms a coiled coil.

This sequence belongs to the TRAFAC class dynamin-like GTPase superfamily. Dynamin/Fzo/YdjA family. As to quaternary structure, oligomeric complex consisting of membrane-bound and soluble forms of OPA1. Interacts with RCC1L; RCC1L acts as a guanine nucleotide exchange factor (GEF) for OPA1 by exchanging bound GDP for free GTP. Interacts with CHCHD3 and IMMT; these interactions occur preferentially with soluble OPA1 forms. Interacts with PRELID1. Post-translationally, cleaved by OMA1 or YME1L downstream of the transmembrane region in response to different signals to generate soluble forms. Cleaved by OMA1 at position S1 following stress conditions, generating the short soluble form (Dynamin-like GTPase OPA1, short form; S-OPA1). AFG3L2 is involved in the regulation of OMA1-dependent processing of OPA1. PARL-dependent proteolytic processing releases an antiapoptotic soluble form not required for mitochondrial fusion.

The protein resides in the mitochondrion inner membrane. It is found in the mitochondrion intermembrane space. The catalysed reaction is GTP + H2O = GDP + phosphate + H(+). Activated by guanine nucleotide exchange factor RCC1L. Dynamin-related GTPase that is essential for normal mitochondrial morphology by mediating fusion of the mitochondrial inner membranes, regulating cristae morphology and maintaining respiratory chain function. Exists in two forms: the transmembrane, long form (Dynamin-like GTPase OPA1, long form; L-OPA1), which is tethered to the inner mitochondrial membrane, and the short soluble form (Dynamin-like GTPase OPA1, short form; S-OPA1), which results from proteolytic cleavage and localizes in the intermembrane space. Both forms (L-OPA1 and S-OPA1) cooperate to catalyze the fusion of the mitochondrial inner membrane. The equilibrium between L-OPA1 and S-OPA1 is essential: excess levels of S-OPA1, produced by cleavage by OMA1 following loss of mitochondrial membrane potential, lead to an impaired equilibrium between L-OPA1 and S-OPA1, inhibiting mitochondrial fusion. The balance between L-OPA1 and S-OPA1 also influences cristae shape and morphology. Involved in remodeling cristae and the release of cytochrome c during apoptosis. Proteolytic processing by PARL in response to intrinsic apoptotic signals may lead to disassembly of OPA1 oligomers and release of the caspase activator cytochrome C (CYCS) into the mitochondrial intermembrane space. Acts as a regulator of T-helper Th17 cells, which are characterized by cells with fused mitochondria with tight cristae, by mediating mitochondrial membrane remodeling: OPA1 is required for interleukin-17 (IL-17) production. Its role in mitochondrial morphology is required for mitochondrial genome maintenance. Its function is as follows. Constitutes the transmembrane long form (L-OPA1) that plays a central role in mitochondrial inner membrane fusion and cristae morphology. L-OPA1 and the soluble short form (S-OPA1) form higher-order helical assemblies that coordinate the fusion of mitochondrial inner membranes. Inner membrane-anchored L-OPA1 molecules initiate membrane remodeling by recruiting soluble S-OPA1 to rapidly polymerize into a flexible cylindrical scaffold encaging the mitochondrial inner membrane. Once at the membrane surface, the formation of S-OPA1 helices induce bilayer curvature. OPA1 dimerization through the paddle region, which inserts into cardiolipin-containing membrane, promotes GTP hydrolysis and the helical assembly of a flexible OPA1 lattice on the membrane, which drives membrane curvature and mitochondrial fusion. Plays a role in the maintenance and remodeling of mitochondrial cristae, some invaginations of the mitochondrial inner membrane that provide an increase in the surface area. Probably acts by forming helical filaments at the inside of inner membrane tubes with the shape and dimensions of crista junctions. The equilibrium between L-OPA1 and S-OPA1 influences cristae shape and morphology: increased L-OPA1 levels promote cristae stacking and elongated mitochondria, while increased S-OPA1 levels correlated with irregular cristae packing and round mitochondria shape. Functionally, constitutes the soluble short form (S-OPA1) generated by cleavage by OMA1, which plays a central role in mitochondrial inner membrane fusion and cristae morphology. The transmembrane long form (L-OPA1) and the S-OPA1 form higher-order helical assemblies that coordinate the fusion of mitochondrial inner membranes. Inner membrane-anchored L-OPA1 molecules initiate membrane remodeling by recruiting soluble S-OPA1 to rapidly polymerize into a flexible cylindrical scaffold encaging the mitochondrial inner membrane. Once at the membrane surface, the formation of S-OPA1 helices induce bilayer curvature. OPA1 dimerization through the paddle region, which inserts into cardiolipin-containing membrane, promotes GTP hydrolysis and the helical assembly of a flexible OPA1 lattice on the membrane, which drives membrane curvature and mitochondrial fusion. Excess levels of S-OPA1 produced by cleavage by OMA1 following stress conditions that induce loss of mitochondrial membrane potential, lead to an impaired equilibrium between L-OPA1 and S-OPA1, thereby inhibiting mitochondrial fusion. Involved in mitochondrial safeguard in response to transient mitochondrial membrane depolarization by mediating flickering: cleavage by OMA1 leads to excess production of S-OPA1, preventing mitochondrial hyperfusion. Plays a role in the maintenance and remodeling of mitochondrial cristae, some invaginations of the mitochondrial inner membrane that provide an increase in the surface area. Probably acts by forming helical filaments at the inside of inner membrane tubes with the shape and dimensions of crista junctions. The equilibrium between L-OPA1 and S-OPA1 influences cristae shape and morphology: increased L-OPA1 levels promote cristae stacking and elongated mitochondria, while increased S-OPA1 levels correlated with irregular cristae packing and round mitochondria shape. In Pongo abelii (Sumatran orangutan), this protein is Dynamin-like GTPase OPA1, mitochondrial.